Consider the following 168-residue polypeptide: Crossover junction endodeoxyribonuclease RuvC (168 aa).

Residues Asp-11, Glu-71, and Asp-144 contribute to the active site. Mg(2+)-binding residues include Asp-11, Glu-71, and Asp-144.

The protein belongs to the RuvC family. Homodimer which binds Holliday junction (HJ) DNA. The HJ becomes 2-fold symmetrical on binding to RuvC with unstacked arms; it has a different conformation from HJ DNA in complex with RuvA. In the full resolvosome a probable DNA-RuvA(4)-RuvB(12)-RuvC(2) complex forms which resolves the HJ. Mg(2+) serves as cofactor.

The protein localises to the cytoplasm. The enzyme catalyses Endonucleolytic cleavage at a junction such as a reciprocal single-stranded crossover between two homologous DNA duplexes (Holliday junction).. The RuvA-RuvB-RuvC complex processes Holliday junction (HJ) DNA during genetic recombination and DNA repair. Endonuclease that resolves HJ intermediates. Cleaves cruciform DNA by making single-stranded nicks across the HJ at symmetrical positions within the homologous arms, yielding a 5'-phosphate and a 3'-hydroxyl group; requires a central core of homology in the junction. The consensus cleavage sequence is 5'-(A/T)TT(C/G)-3'. Cleavage occurs on the 3'-side of the TT dinucleotide at the point of strand exchange. HJ branch migration catalyzed by RuvA-RuvB allows RuvC to scan DNA until it finds its consensus sequence, where it cleaves and resolves the cruciform DNA. This chain is Crossover junction endodeoxyribonuclease RuvC, found in Protochlamydia amoebophila (strain UWE25).